Here is an 864-residue protein sequence, read N- to C-terminus: Leucine--tRNA ligase (864 aa).

The 'HIGH' region motif lies at 42-52 (PYPSGKLHMGH). The 'KMSKS' region signature appears at 624-628 (KMSKS). Lysine 627 provides a ligand contact to ATP.

This sequence belongs to the class-I aminoacyl-tRNA synthetase family.

Its subcellular location is the cytoplasm. It carries out the reaction tRNA(Leu) + L-leucine + ATP = L-leucyl-tRNA(Leu) + AMP + diphosphate. This chain is Leucine--tRNA ligase, found in Burkholderia pseudomallei (strain 668).